Reading from the N-terminus, the 504-residue chain is Bacterial leucyl aminopeptidase (504 aa).

The first 21 residues, 1–21 (MKYTKTLLAMVLSATFCQAYA), serve as a signal peptide directing secretion. Residues 22–106 (EDKVWISIGA…AMPTTLASFV (85 aa)) constitute a propeptide that is removed on maturation. Zn(2+)-binding residues include histidine 203, aspartate 223, glutamate 258, and aspartate 285. Residues cysteine 329 and cysteine 333 are joined by a disulfide bond. Position 362 (histidine 362) interacts with Zn(2+). The propeptide at 406-504 (LEDGVPVTDL…SGASLKASTF (99 aa)) is removed in mature form.

Belongs to the peptidase M28 family. M28E subfamily. Requires Zn(2+) as cofactor.

The protein resides in the secreted. The catalysed reaction is Release of an N-terminal amino acid, preferentially leucine, but not glutamic or aspartic acids.. The chain is Bacterial leucyl aminopeptidase from Vibrio proteolyticus (Aeromonas proteolytica).